The chain runs to 492 residues: Octanoyltransferase (492 aa).

The unknown stretch occupies residues 1–255 (MRCILLGSGT…GYDGLEAIID (255 aa)). The interval 256 to 492 (EKGIRIKDFE…AVFRRNFGAL (237 aa)) is lipB domain. Positions 305 to 492 (RKPQNTLLFC…AVFRRNFGAL (188 aa)) constitute a BPL/LPL catalytic domain. Substrate contacts are provided by residues 350–357 (RGGDITYH), 423–425 (AIG), and 436–438 (GFA). The active-site Acyl-thioester intermediate is cysteine 454.

The protein in the C-terminal section; belongs to the LipB family.

It is found in the cytoplasm. It carries out the reaction octanoyl-[ACP] + L-lysyl-[protein] = N(6)-octanoyl-L-lysyl-[protein] + holo-[ACP] + H(+). It functions in the pathway protein modification; protein lipoylation via endogenous pathway; protein N(6)-(lipoyl)lysine from octanoyl-[acyl-carrier-protein]: step 1/2. In terms of biological role, catalyzes the transfer of endogenously produced octanoic acid from octanoyl-acyl-carrier-protein onto the lipoyl domains of lipoate-dependent enzymes. Lipoyl-ACP can also act as a substrate although octanoyl-ACP is likely to be the physiological substrate. The sequence is that of Octanoyltransferase from Porphyromonas gingivalis (strain ATCC BAA-308 / W83).